The chain runs to 136 residues: Large ribosomal subunit protein uL16 (136 aa).

The protein belongs to the universal ribosomal protein uL16 family. In terms of assembly, part of the 50S ribosomal subunit.

Functionally, binds 23S rRNA and is also seen to make contacts with the A and possibly P site tRNAs. The chain is Large ribosomal subunit protein uL16 from Rickettsia canadensis (strain McKiel).